The primary structure comprises 216 residues: Adenylate kinase (216 aa).

10–15 (GAGKGT) contributes to the ATP binding site. The NMP stretch occupies residues 30–59 (STGDMFRAAMKAETEMGLQAKSFIDKGALV). Residues threonine 31, arginine 36, 57 to 59 (ALV), 85 to 88 (GFPR), and glutamine 92 each bind AMP. The segment at 126–163 (GRRICKECGATYHLEFNPPAKADVCDKCGGELYQRSDD) is LID. Arginine 127 serves as a coordination point for ATP. Positions 130 and 133 each coordinate Zn(2+). 136–137 (TY) contributes to the ATP binding site. The Zn(2+) site is built by cysteine 150 and cysteine 153. AMP-binding residues include arginine 160 and arginine 171. Glutamine 199 provides a ligand contact to ATP.

Belongs to the adenylate kinase family. As to quaternary structure, monomer.

The protein localises to the cytoplasm. It catalyses the reaction AMP + ATP = 2 ADP. It functions in the pathway purine metabolism; AMP biosynthesis via salvage pathway; AMP from ADP: step 1/1. In terms of biological role, catalyzes the reversible transfer of the terminal phosphate group between ATP and AMP. Plays an important role in cellular energy homeostasis and in adenine nucleotide metabolism. The chain is Adenylate kinase from Bacillus cereus (strain ATCC 10987 / NRS 248).